Reading from the N-terminus, the 141-residue chain is ATP synthase epsilon chain (141 aa).

This sequence belongs to the ATPase epsilon chain family. As to quaternary structure, F-type ATPases have 2 components, CF(1) - the catalytic core - and CF(0) - the membrane proton channel. CF(1) has five subunits: alpha(3), beta(3), gamma(1), delta(1), epsilon(1). CF(0) has three main subunits: a, b and c.

It localises to the cell inner membrane. Its function is as follows. Produces ATP from ADP in the presence of a proton gradient across the membrane. The protein is ATP synthase epsilon chain of Chromohalobacter salexigens (strain ATCC BAA-138 / DSM 3043 / CIP 106854 / NCIMB 13768 / 1H11).